The following is a 114-amino-acid chain: N(4)-acetylcytidine amidohydrolase (114 aa).

An ASCH domain is found at 8-93 (TFFEFLTPLV…ALIQEIYPNI (86 aa)). Lysine 22 (proton acceptor) is an active-site residue. Threonine 25 (nucleophile) is an active-site residue. Glutamate 75 acts as the Proton donor in catalysis.

Belongs to the N(4)-acetylcytidine amidohydrolase family.

It carries out the reaction N(4)-acetylcytidine + H2O = cytidine + acetate + H(+). The catalysed reaction is N(4)-acetyl-2'-deoxycytidine + H2O = 2'-deoxycytidine + acetate + H(+). It catalyses the reaction N(4)-acetylcytosine + H2O = cytosine + acetate + H(+). Catalyzes the hydrolysis of N(4)-acetylcytidine (ac4C). This is N(4)-acetylcytidine amidohydrolase from Vibrio cholerae serotype O1 (strain ATCC 39541 / Classical Ogawa 395 / O395).